A 263-amino-acid polypeptide reads, in one-letter code: RNA exonuclease 4 (263 aa).

The segment at 1-27 is disordered; it reads MRLSSNWSKLQDGVTKKAGKKRIDKKP. Residues 17–27 are compositionally biased toward basic residues; the sequence is KAGKKRIDKKP. The region spanning 95 to 247 is the Exonuclease domain; it reads YIAMDCEFVG…EDARATMLIY (153 aa).

It belongs to the REXO4 family.

It is found in the nucleus. Exoribonuclease involved in ribosome biosynthesis. Involved in the processing of ITS1, the internal transcribed spacer localized between the 18S and 5.8S rRNAs. In Candida glabrata (strain ATCC 2001 / BCRC 20586 / JCM 3761 / NBRC 0622 / NRRL Y-65 / CBS 138) (Yeast), this protein is RNA exonuclease 4 (REX4).